A 617-amino-acid polypeptide reads, in one-letter code: Protein fem-1 homolog A (617 aa).

7 ANK repeats span residues 2–32 (DISAAVFNAARDGKLKLMQKLLINKSPEERA), 40–70 (EGGTPLLIAARYGHLPVVHFLLERCGANVAL), 82–111 (EGAPPLWAASAAGHLPVVKALLEHGAPVNN), 115–144 (TNSTPLRAACFDGHLEIVRYLVEHQADLEV), 148–177 (HGHTCLMISCYKGHREIAQFLLEKGADVNR), 181–210 (KGNTALHDCAESGSLEIMKMLLKCDARMER), and 213–242 (YGMTPLLAASVTGHTNIVEFLVHQPRASRE). 2 TPR repeats span residues 245 to 279 (IHALELLGATFVDKKRDLLGAMRYWRRAMELRWAG) and 339 to 372 (SYYIRYRGAVYADSGNFERCIRLWKYALDMQQSN). ANK repeat units follow at residues 482-524 (GGHT…DVDS) and 528-557 (DNNTPLHIAAANGCPDIMAALIRAGAHFDA).

Belongs to the fem-1 family. Component of a CRL2 E3 ubiquitin-protein ligase complex, also named ECS (Elongin BC-CUL2/5-SOCS-box protein) complex.

The protein localises to the mitochondrion. It is found in the cytoplasm. Its pathway is protein modification; protein ubiquitination. In terms of biological role, substrate-recognition component of a Cul2-RING (CRL2) E3 ubiquitin-protein ligase complex of the DesCEND (destruction via C-end degrons) pathway, which recognizes a C-degron located at the extreme C terminus of target proteins, leading to their ubiquitination and degradation. The C-degron recognized by the DesCEND pathway is usually a motif of less than ten residues and can be present in full-length proteins, truncated proteins or proteolytically cleaved forms. The CRL2(FEM1A) complex specifically recognizes proteins with an arginine at the C-terminus: recognizes and binds proteins ending with -Lys/Arg-Xaa-Arg and -Lys/Arg-Xaa-Xaa-Arg C-degrons, leading to their ubiquitination and degradation. In Danio rerio (Zebrafish), this protein is Protein fem-1 homolog A.